Reading from the N-terminus, the 153-residue chain is Transcriptional regulator MraZ (153 aa).

SpoVT-AbrB domains lie at 7–61 (KEKH…LPDV) and 90–133 (LEMV…EPGR).

It belongs to the MraZ family. Forms oligomers.

The protein resides in the cytoplasm. The protein localises to the nucleoid. This is Transcriptional regulator MraZ from Chlorobium luteolum (strain DSM 273 / BCRC 81028 / 2530) (Pelodictyon luteolum).